Consider the following 283-residue polypeptide: Pantothenate synthetase (283 aa).

34–41 contacts ATP; sequence MGALHDGH. The Proton donor role is filled by His41. Gln65 serves as a coordination point for (R)-pantoate. Position 65 (Gln65) interacts with beta-alanine. Position 152 to 155 (152 to 155) interacts with ATP; it reads GSKD. Position 158 (Gln158) interacts with (R)-pantoate. ATP contacts are provided by residues Val181 and 189–192; that span reads MSSR.

Belongs to the pantothenate synthetase family. As to quaternary structure, homodimer.

The protein localises to the cytoplasm. The enzyme catalyses (R)-pantoate + beta-alanine + ATP = (R)-pantothenate + AMP + diphosphate + H(+). Its pathway is cofactor biosynthesis; (R)-pantothenate biosynthesis; (R)-pantothenate from (R)-pantoate and beta-alanine: step 1/1. In terms of biological role, catalyzes the condensation of pantoate with beta-alanine in an ATP-dependent reaction via a pantoyl-adenylate intermediate. This Rhodopseudomonas palustris (strain ATCC BAA-98 / CGA009) protein is Pantothenate synthetase.